Consider the following 125-residue polypeptide: uncharacterized protein (125 aa).

The next 4 helical transmembrane spans lie at 9-29 (IANAGALAVAVWLLDKITLTG), 33-53 (GEKTLTLIVVALVFGLVNMVV), 56-76 (IVQVLTFPLFILTLGLFTLVV), and 100-120 (FWTAVLGGLIVSIVSWALNAF).

It is found in the cell membrane. This is an uncharacterized protein from Streptomyces coelicolor (strain ATCC BAA-471 / A3(2) / M145).